Reading from the N-terminus, the 429-residue chain is U3 small nucleolar RNA-associated protein 18 homolog (429 aa).

WD repeat units lie at residues 117–156, 295–336, 345–386, and 392–428; these read RYTR…KKDR, TDDG…NSTN, NLVT…TFKN, and GKVT…HFTD.

Belongs to the WD repeat UTP18 family.

The protein resides in the nucleus. It is found in the nucleolus. Functionally, involved in nucleolar processing of pre-18S ribosomal RNA. The sequence is that of U3 small nucleolar RNA-associated protein 18 homolog from Caenorhabditis elegans.